Reading from the N-terminus, the 163-residue chain is MFRTMLKSKIHRATVTQADLHYVGSVTVDADLMDAADLLEGEQVAIVDVTNGARLETYVITGERGSGVIGINGAAAHLIEPGDLVILISYGVMDELEARSVRPKVIFVDADNRIVERGQDPGHAPAGSGLAGTAASVTSAITEAAAETDDAAKLDALLQQPEH.

The active-site Schiff-base intermediate with substrate; via pyruvic acid is Ser-25. Position 25 is a pyruvic acid (Ser) (Ser-25). Thr-57 provides a ligand contact to substrate. Catalysis depends on Tyr-58, which acts as the Proton donor. Gly-73–Ala-75 lines the substrate pocket.

This sequence belongs to the PanD family. In terms of assembly, heterooctamer of four alpha and four beta subunits. It depends on pyruvate as a cofactor. Is synthesized initially as an inactive proenzyme, which is activated by self-cleavage at a specific serine bond to produce a beta-subunit with a hydroxyl group at its C-terminus and an alpha-subunit with a pyruvoyl group at its N-terminus.

It localises to the cytoplasm. It catalyses the reaction L-aspartate + H(+) = beta-alanine + CO2. It participates in cofactor biosynthesis; (R)-pantothenate biosynthesis; beta-alanine from L-aspartate: step 1/1. In terms of biological role, catalyzes the pyruvoyl-dependent decarboxylation of aspartate to produce beta-alanine. The sequence is that of Aspartate 1-decarboxylase from Saccharopolyspora erythraea (strain ATCC 11635 / DSM 40517 / JCM 4748 / NBRC 13426 / NCIMB 8594 / NRRL 2338).